The sequence spans 223 residues: Ribosomal RNA small subunit methyltransferase G (223 aa).

S-adenosyl-L-methionine is bound by residues G90, L95, 141-142 (VE), and R156.

It belongs to the methyltransferase superfamily. RNA methyltransferase RsmG family.

The protein localises to the cytoplasm. It catalyses the reaction guanosine(527) in 16S rRNA + S-adenosyl-L-methionine = N(7)-methylguanosine(527) in 16S rRNA + S-adenosyl-L-homocysteine. Specifically methylates the N7 position of guanine in position 527 of 16S rRNA. The polypeptide is Ribosomal RNA small subunit methyltransferase G (Ralstonia nicotianae (strain ATCC BAA-1114 / GMI1000) (Ralstonia solanacearum)).